The sequence spans 354 residues: Transcription factor BHLH3 (354 aa).

The tract at residues 124–143 (VAEEETSGDKALLHGGGGSS) is disordered. The segment at 178-191 (GTPSKNLMAERRRR) is basic motif. The bHLH domain maps to 178–227 (GTPSKNLMAERRRRKRLNDRLSMLRSIVPKISKMDRTSILGDTIDYVKEL). The interval 192-227 (KRLNDRLSMLRSIVPKISKMDRTSILGDTIDYVKEL) is helix-loop-helix motif.

This sequence belongs to the bHLH protein family. Interacts with LAX1. In terms of processing, phosphorylated by MAPK3 and MAPK6.

It is found in the nucleus. Its subcellular location is the cytoplasm. Its function is as follows. Transcription factor involved in defense responses that functions downstream of RAC1 and upstream of PAL1 and WRKY19 genes. The protein is Transcription factor BHLH3 of Oryza sativa subsp. japonica (Rice).